The following is a 361-amino-acid chain: AP2/ERF and B3 domain-containing transcription repressor TEM1 (361 aa).

The disordered stretch occupies residues 1-73; it reads MEYSCVDDSS…SRKLPSSKYK (73 aa). Over residues 9-27 the composition is skewed to low complexity; that stretch reads SSTTSESLSISTTPKPTTT. The segment at residues 71 to 126 is a DNA-binding region (AP2/ERF); it reads KYKGVVPQPNGRWGAQIYEKHQRVWLGTFNEEEEAASSYDIAVRRFRGRDAVTNFK. The segment at residues 195 to 306 is a DNA-binding region (TF-B3); sequence FEKTVTPSDV…QLYIHWKVRS (112 aa).

This sequence belongs to the AP2/ERF transcription factor family. RAV subfamily. Interacts with FT. Expressed in leaves.

The protein resides in the nucleus. Its function is as follows. Transcriptional repressor of flowering time on long day plants. Acts directly on FT expression by binding 5'-CAACA-3' and 5'-CACCTG-3 sequences. Functionally redundant with TEM2. In Arabidopsis thaliana (Mouse-ear cress), this protein is AP2/ERF and B3 domain-containing transcription repressor TEM1 (TEM1).